The following is a 219-amino-acid chain: MAAARCLGWTLSPLWRWWQVRGLPPSSATGLCSRGRTYSRTALYELLGVPSTATQAQIKAAYYRQSFLYHPDRNPGSAEAAERFTRVSEAYLVLGSTILRRKYDRGLLSDQDLRGPGVKPSKTPVADPAPPRPPPYTPRAPGGSRASPGDGRTMFDFDAFYQAHYGEQLERERRLRARREALRKKQENQANKGTSWDDTRDATFFVVLFLIFVFVGFRI.

The transit peptide at 1 to 38 (MAAARCLGWTLSPLWRWWQVRGLPPSSATGLCSRGRTY) directs the protein to the mitochondrion. Residues 42–107 (ALYELLGVPS…ILRRKYDRGL (66 aa)) form the J domain. Positions 109-148 (SDQDLRGPGVKPSKTPVADPAPPRPPPYTPRAPGGSRASP) are disordered. The segment covering 127-138 (DPAPPRPPPYTP) has biased composition (pro residues). Residues 202 to 218 (ATFFVVLFLIFVFVGFR) traverse the membrane as a helical segment.

Associates with the ATP synthase complex. Interacts with MT-ATP6; interaction is direct. Interacts with ATP5MC2; interaction is direct. In terms of tissue distribution, in brain, expressed in gray matter structures.

It is found in the mitochondrion inner membrane. In terms of biological role, mitochondrial protein enriched in neurons that acts as a regulator of mitochondrial respiration. Associates with the ATP synthase complex and facilitates ATP synthesis. May be a chaperone protein involved in the turnover of the subunits of mitochondrial complex I N-module. It facilitates the degradation of N-module subunits damaged by oxidative stress, and contributes to complex I functional efficiency. This Mus musculus (Mouse) protein is DnaJ homolog subfamily C member 30, mitochondrial.